Reading from the N-terminus, the 480-residue chain is F-box only protein 3 (480 aa).

One can recognise an F-box domain in the interval 10–56 (LLTLESLPTDPLLLILSFVDYRDLINCCYVSRRLSQLSTHDPLWRRH). The 131-residue stretch at 278 to 408 (VATTGDITVS…FHMACPTFRV (131 aa)) folds into the ApaG domain. Residues 419-459 (EYEEMEEEAEEEEEEENDDSADMDESDESDEDENESDEGEG) show a composition bias toward acidic residues. A disordered region spans residues 419–464 (EYEEMEEEAEEEEEEENDDSADMDESDESDEDENESDEGEGEERRR).

In terms of assembly, part of a SCF (SKP1-cullin-F-box) protein ligase complex SCF(FBXO3) consisting of FBXO3, SKP1, CUL1 and RBX1. Interacts with PML, interaction is direct and takes place either alone or within the SCF complex.

It localises to the nucleus. Its pathway is protein modification; protein ubiquitination. Functionally, substrate recognition component of the SCF (SKP1-CUL1-F-box protein)-type E3 ubiquitin ligase complex, SCF(FBXO3), which mediates the ubiquitination and subsequent proteasomal degradation of target proteins. Mediates the ubiquitination of HIPK2 and probably that of EP300, leading to rapid degradation by the proteasome. In the presence of PML, HIPK2 ubiquitination still occurs, but degradation is prevented. PML, HIPK2 and FBXO3 may act synergically to activate p53/TP53-dependent transactivation. The SCF(FBXO3) also acts as a regulator of inflammation by mediating ubiquitination and degradation of FBXL2 in response to lipopolysaccharide (LPS). The SCF(FBXO3) complex specifically recognizes FBXL2 phosphorylated at 'Thr-404' and promotes its ubiquitination. This chain is F-box only protein 3 (Fbxo3), found in Rattus norvegicus (Rat).